A 303-amino-acid polypeptide reads, in one-letter code: Glutathione transport system permease protein GsiD (303 aa).

Helical transmembrane passes span 40 to 60 (AMTAALFVILLIVVAIFARWI), 105 to 125 (LAAGVFAVFIGVAIGTLLGLL), 144 to 164 (LFAFPGILLAIAVVAVLGSGI), 165 to 185 (ANVIIAVAIFSIPAFARLVRG), 222 to 242 (IVVFFTMRIGTSIISAASLSF), and 266 to 286 (VIAPHVAVFPALAIFLTVLAF). The region spanning 101–290 (AQISLAAGVF…LTVLAFNLLG (190 aa)) is the ABC transmembrane type-1 domain.

It belongs to the binding-protein-dependent transport system permease family. The complex is composed of two ATP-binding proteins (GsiA), two transmembrane proteins (GsiC and GsiD) and a solute-binding protein (GsiB).

Its subcellular location is the cell inner membrane. Part of the ABC transporter complex GsiABCD involved in glutathione import. Probably responsible for the translocation of the substrate across the membrane. This Shigella flexneri serotype 5b (strain 8401) protein is Glutathione transport system permease protein GsiD.